A 417-amino-acid chain; its full sequence is Pigment epithelium-derived factor (417 aa).

The first 19 residues, 1–19 (MQALVLLLWTGALLGHGSS), serve as a signal peptide directing secretion. Positions 17–41 (GSSQNVPSSSEGSPVPDSTGEPVEE) are disordered. Residues 18 to 28 (SSQNVPSSSEG) show a composition bias toward polar residues. Glutamine 20 carries the post-translational modification Pyrrolidone carboxylic acid. A Phosphoserine modification is found at serine 24. The N-linked (GlcNAc...) asparagine glycan is linked to asparagine 284.

Belongs to the serpin family. Interacts with PNPLA2; this interaction stimulates the phospholipase A2 activity of PNPLA2. In terms of tissue distribution, highly expressed in the liver, gastric glandular mucosa and renal tubules. It is also expressed in the brain, heart, lung retina and testes.

The protein resides in the secreted. It is found in the melanosome. Functionally, neurotrophic protein; induces extensive neuronal differentiation in retinoblastoma cells. Potent inhibitor of angiogenesis. As it does not undergo the S (stressed) to R (relaxed) conformational transition characteristic of active serpins, it exhibits no serine protease inhibitory activity. This is Pigment epithelium-derived factor (Serpinf1) from Mus musculus (Mouse).